A 273-amino-acid polypeptide reads, in one-letter code: Dermonecrotic toxin LsaSicTox-alphaIB1avi (273 aa).

His5 is a catalytic residue. Mg(2+)-binding residues include Glu25 and Asp27. Catalysis depends on His41, which acts as the Nucleophile. Intrachain disulfides connect Cys45-Cys51 and Cys47-Cys190. Position 85 (Asp85) interacts with Mg(2+).

Belongs to the arthropod phospholipase D family. Class II subfamily. Requires Mg(2+) as cofactor. In terms of tissue distribution, expressed by the venom gland.

It localises to the secreted. It carries out the reaction an N-(acyl)-sphingosylphosphocholine = an N-(acyl)-sphingosyl-1,3-cyclic phosphate + choline. It catalyses the reaction an N-(acyl)-sphingosylphosphoethanolamine = an N-(acyl)-sphingosyl-1,3-cyclic phosphate + ethanolamine. The enzyme catalyses a 1-acyl-sn-glycero-3-phosphocholine = a 1-acyl-sn-glycero-2,3-cyclic phosphate + choline. The catalysed reaction is a 1-acyl-sn-glycero-3-phosphoethanolamine = a 1-acyl-sn-glycero-2,3-cyclic phosphate + ethanolamine. In terms of biological role, dermonecrotic toxins cleave the phosphodiester linkage between the phosphate and headgroup of certain phospholipids (sphingolipid and lysolipid substrates), forming an alcohol (often choline) and a cyclic phosphate. This toxin acts on sphingomyelin (SM). It may also act on ceramide phosphoethanolamine (CPE), lysophosphatidylcholine (LPC) and lysophosphatidylethanolamine (LPE), but not on lysophosphatidylserine (LPS), and lysophosphatidylglycerol (LPG). It acts by transphosphatidylation, releasing exclusively cyclic phosphate products as second products. Induces dermonecrosis, hemolysis, increased vascular permeability, edema, inflammatory response, and platelet aggregation. This is Dermonecrotic toxin LsaSicTox-alphaIB1avi from Loxosceles sabina (Tucson recluse spider).